We begin with the raw amino-acid sequence, 249 residues long: Flagellar brake protein YcgR (249 aa).

Positions 117–236 constitute a PilZ domain; the sequence is QRREFFRVDA…ERELQQVIFS (120 aa).

Belongs to the YcgR family. In terms of assembly, monomer. Interacts with the flagellar basal bodies.

It localises to the bacterial flagellum basal body. Functionally, acts as a flagellar brake, regulating swimming and swarming in a bis-(3'-5') cyclic diguanylic acid (c-di-GMP)-dependent manner. Binds 1 c-di-GMP dimer per subunit. Increasing levels of c-di-GMP lead to decreased motility. This Erwinia tasmaniensis (strain DSM 17950 / CFBP 7177 / CIP 109463 / NCPPB 4357 / Et1/99) protein is Flagellar brake protein YcgR.